We begin with the raw amino-acid sequence, 312 residues long: Glyoxylate/hydroxypyruvate reductase A (312 aa).

R227 is a catalytic residue. Residue H275 is the Proton donor of the active site.

This sequence belongs to the D-isomer specific 2-hydroxyacid dehydrogenase family. GhrA subfamily.

Its subcellular location is the cytoplasm. It carries out the reaction glycolate + NADP(+) = glyoxylate + NADPH + H(+). The catalysed reaction is (R)-glycerate + NAD(+) = 3-hydroxypyruvate + NADH + H(+). The enzyme catalyses (R)-glycerate + NADP(+) = 3-hydroxypyruvate + NADPH + H(+). Functionally, catalyzes the NADPH-dependent reduction of glyoxylate and hydroxypyruvate into glycolate and glycerate, respectively. The protein is Glyoxylate/hydroxypyruvate reductase A of Citrobacter koseri (strain ATCC BAA-895 / CDC 4225-83 / SGSC4696).